We begin with the raw amino-acid sequence, 514 residues long: DNA-(apurinic or apyrimidinic site) endonuclease 2 (514 aa).

Residues N8 and E48 each coordinate Mg(2+). The active site involves Y156. Positions 197, 199, 303, and 304 each coordinate Mg(2+). Residue D197 is the Proton donor/acceptor of the active site. The active-site Proton acceptor is the H304. Residues 359–417 (PSNQTQVHMRKNKARVRSTRSRPSKTGSSRGQKNLMSYFQPSSSGPQTSNLDLPSLGTL) are disordered. Over residues 366-381 (HMRKNKARVRSTRSRP) the composition is skewed to basic residues. A Glycyl lysine isopeptide (Lys-Gly) (interchain with G-Cter in ubiquitin) cross-link involves residue K371. Polar residues predominate over residues 382–410 (SKTGSSRGQKNLMSYFQPSSSGPQTSNLD). Residues 390-397 (QKNLMSYF) are required for the interaction and colocalization with PCNA in nuclear foci in presence of oxidative-induced DNA damaging agents. Zn(2+) contacts are provided by C465, H468, C491, and C505. The segment at 465–514 (CGGHREPCVMRTVKKPGPNLGRHFYMCARPQGPPTDPSSRCNFFLWSRPS) adopts a GRF-type zinc-finger fold.

This sequence belongs to the DNA repair enzymes AP/ExoA family. Interacts with PCNA; this interaction is triggered by reactive oxygen species and increased by misincorporation of uracil in nuclear DNA. Mg(2+) is required as a cofactor. It depends on Mn(2+) as a cofactor. In terms of processing, ubiquitinated by the CUL9-RBX1 complex. Ubiquitinated by MKRN3 at Lys-371 leading to proteasomal degradation.

It is found in the nucleus. The protein localises to the cytoplasm. It localises to the mitochondrion. The catalysed reaction is Exonucleolytic cleavage in the 3'- to 5'-direction to yield nucleoside 5'-phosphates.. Its activity is regulated as follows. 3'-5' exonuclease activity is activated by sodium and manganese. 3'-5' exonuclease and 3'-phosphodiesterase activities are stimulated in presence of PCNA. Functionally, functions as a weak apurinic/apyrimidinic (AP) endodeoxyribonuclease in the DNA base excision repair (BER) pathway of DNA lesions induced by oxidative and alkylating agents. Initiates repair of AP sites in DNA by catalyzing hydrolytic incision of the phosphodiester backbone immediately adjacent to the damage, generating a single-strand break with 5'-deoxyribose phosphate and 3'-hydroxyl ends. Also displays double-stranded DNA 3'-5' exonuclease, 3'-phosphodiesterase activities. Shows robust 3'-5' exonuclease activity on 3'-recessed heteroduplex DNA and is able to remove mismatched nucleotides preferentially. Shows fairly strong 3'-phosphodiesterase activity involved in the removal of 3'-damaged termini formed in DNA by oxidative agents. In the nucleus functions in the PCNA-dependent BER pathway. Plays a role in reversing blocked 3' DNA ends, problematic lesions that preclude DNA synthesis. Required for somatic hypermutation (SHM) and DNA cleavage step of class switch recombination (CSR) of immunoglobulin genes. Required for proper cell cycle progression during proliferation of peripheral lymphocytes. The polypeptide is DNA-(apurinic or apyrimidinic site) endonuclease 2 (APEX2) (Bos taurus (Bovine)).